The sequence spans 374 residues: Putative F-box protein At5g60060 (374 aa).

The F-box domain maps to Ser-9–Lys-61.

This Arabidopsis thaliana (Mouse-ear cress) protein is Putative F-box protein At5g60060.